Here is a 110-residue protein sequence, read N- to C-terminus: Large ribosomal subunit protein uL22 (110 aa).

It belongs to the universal ribosomal protein uL22 family. Part of the 50S ribosomal subunit.

Functionally, this protein binds specifically to 23S rRNA; its binding is stimulated by other ribosomal proteins, e.g. L4, L17, and L20. It is important during the early stages of 50S assembly. It makes multiple contacts with different domains of the 23S rRNA in the assembled 50S subunit and ribosome. In terms of biological role, the globular domain of the protein is located near the polypeptide exit tunnel on the outside of the subunit, while an extended beta-hairpin is found that lines the wall of the exit tunnel in the center of the 70S ribosome. The protein is Large ribosomal subunit protein uL22 of Vibrio campbellii (strain ATCC BAA-1116).